Here is a 49-residue protein sequence, read N- to C-terminus: Large ribosomal subunit protein uL16 (49 aa).

Belongs to the universal ribosomal protein uL16 family. As to quaternary structure, part of the 50S ribosomal subunit.

Functionally, binds 23S rRNA and is also seen to make contacts with the A and possibly P site tRNAs. The protein is Large ribosomal subunit protein uL16 (rplP) of Aquifex pyrophilus.